The sequence spans 404 residues: Argininosuccinate synthase (404 aa).

Residues 10-18 and alanine 38 each bind ATP; that span reads AYSGGVDTS. Tyrosine 89 provides a ligand contact to L-citrulline. An ATP-binding site is contributed by glycine 119. Residues threonine 121, asparagine 125, and aspartate 126 each contribute to the L-aspartate site. L-citrulline is bound at residue asparagine 125. Residues arginine 129, serine 177, serine 186, glutamate 262, and tyrosine 274 each coordinate L-citrulline.

It belongs to the argininosuccinate synthase family. Type 1 subfamily. As to quaternary structure, homotetramer.

The protein resides in the cytoplasm. The enzyme catalyses L-citrulline + L-aspartate + ATP = 2-(N(omega)-L-arginino)succinate + AMP + diphosphate + H(+). Its pathway is amino-acid biosynthesis; L-arginine biosynthesis; L-arginine from L-ornithine and carbamoyl phosphate: step 2/3. This is Argininosuccinate synthase from Prochlorococcus marinus (strain MIT 9515).